The following is a 326-amino-acid chain: Beta-ketoacyl-[acyl-carrier-protein] synthase III (326 aa).

Active-site residues include C120 and H253. The ACP-binding stretch occupies residues 254–258 (QANIR). N283 is an active-site residue.

This sequence belongs to the thiolase-like superfamily. FabH family. Homodimer.

The protein resides in the cytoplasm. The enzyme catalyses malonyl-[ACP] + acetyl-CoA + H(+) = 3-oxobutanoyl-[ACP] + CO2 + CoA. It participates in lipid metabolism; fatty acid biosynthesis. Catalyzes the condensation reaction of fatty acid synthesis by the addition to an acyl acceptor of two carbons from malonyl-ACP. Catalyzes the first condensation reaction which initiates fatty acid synthesis and may therefore play a role in governing the total rate of fatty acid production. Possesses both acetoacetyl-ACP synthase and acetyl transacylase activities. Its substrate specificity determines the biosynthesis of branched-chain and/or straight-chain of fatty acids. This chain is Beta-ketoacyl-[acyl-carrier-protein] synthase III, found in Ralstonia pickettii (strain 12J).